Reading from the N-terminus, the 190-residue chain is Elongation factor P-like protein (190 aa).

The protein belongs to the elongation factor P family.

The chain is Elongation factor P-like protein from Serratia proteamaculans (strain 568).